Consider the following 35-residue polypeptide: Manganese peroxidase (35 aa).

Residues 1–11 show a composition bias toward basic and acidic residues; sequence LSLLGHDERVT. The tract at residues 1–35 is disordered; sequence LSLLGHDERVTPEPFDSVTAQNARGNQADVQSLPR. A compositionally biased stretch (polar residues) spans 18 to 35; it reads VTAQNARGNQADVQSLPR.

It belongs to the peroxidase family. Requires heme b as cofactor. Ca(2+) serves as cofactor.

The enzyme catalyses 2 Mn(2+) + H2O2 + 2 H(+) = 2 Mn(3+) + 2 H2O. In terms of biological role, has manganese peroxidase activity. The sequence is that of Manganese peroxidase from Irpex lacteus (Milk-white toothed polypore).